A 236-amino-acid polypeptide reads, in one-letter code: 3-oxoacyl-[acyl-carrier-protein] reductase (236 aa).

An N-acetylmethionine modification is found at Met-1. NADP(+)-binding positions include 11–14 (SRGI) and 34–35 (RN). Lys-40 carries the post-translational modification N6-acetyllysine. 83-85 (AAG) is a binding site for NADP(+). Lys-96 is subject to N6-acetyllysine. Ser-134 contacts substrate. Residues Tyr-147, Lys-151, and 180–182 (IHT) contribute to the NADP(+) site. The active-site Proton acceptor is Tyr-147. An N6-acetyllysine modification is found at Lys-194.

It belongs to the short-chain dehydrogenases/reductases (SDR) family. As to quaternary structure, homotetramer (in vitro). Heterotetramer with HSD17B8; contains two molecules each of HSD17B8 and CBR4. Does not form homotetramers when HSD17B8 is coexpressed, only heterotetramers (in vitro).

Its subcellular location is the mitochondrion matrix. It carries out the reaction a (3R)-hydroxyacyl-[ACP] + NADP(+) = a 3-oxoacyl-[ACP] + NADPH + H(+). The enzyme catalyses a quinone + NADPH + H(+) = a quinol + NADP(+). Its pathway is lipid metabolism; fatty acid biosynthesis. Functionally, component of the heterotetramer complex KAR (3-ketoacyl-[acyl carrier protein] reductase or 3-ketoacyl-[ACP] reductase) that forms part of the mitochondrial fatty acid synthase (mtFAS). Beta-subunit of the KAR heterotetramer complex, responsible for the 3-ketoacyl-ACP reductase activity of the mtFAS, reduces 3-oxoacyl-[ACP] to (3R)-hydroxyacyl-[ACP] in a NADPH-dependent manner with no chain length preference, thereby participating in mitochondrial fatty acid biosynthesis. The homotetramer has NADPH-dependent quinone reductase activity (in vitro), hence could play a role in protection against cytotoxicity of exogenous quinones. As a heterotetramer, it can also reduce 9,10-phenanthrenequinone, 1,4-benzoquinone and various other o-quinones and p-quinones (in vitro). This Rattus norvegicus (Rat) protein is 3-oxoacyl-[acyl-carrier-protein] reductase (Cbr4).